The primary structure comprises 332 residues: DNA-directed RNA polymerase subunit alpha (332 aa).

Residues 2 to 234 (TVTANQVLRP…DQLSVFGDFT (233 aa)) are alpha N-terminal domain (alpha-NTD). The segment at 248–332 (VDPVLLRPID…AGVAQHGMLG (85 aa)) is alpha C-terminal domain (alpha-CTD).

Belongs to the RNA polymerase alpha chain family. In terms of assembly, homodimer. The RNAP catalytic core consists of 2 alpha, 1 beta, 1 beta' and 1 omega subunit. When a sigma factor is associated with the core the holoenzyme is formed, which can initiate transcription.

It catalyses the reaction RNA(n) + a ribonucleoside 5'-triphosphate = RNA(n+1) + diphosphate. Functionally, DNA-dependent RNA polymerase catalyzes the transcription of DNA into RNA using the four ribonucleoside triphosphates as substrates. In Xanthomonas axonopodis pv. citri (strain 306), this protein is DNA-directed RNA polymerase subunit alpha.